Consider the following 450-residue polypeptide: MNPNQKIITIGSICMVVGIISLMLQIGNIISVWVSHIIQTWHPNQPEPCNQSINFYTEQAAASVTLAGNSSLCPISGWAIYSKDNSIRIGSKGDVFVIREPFISCSHLECRTFFLTQGALLNDKHSNGTVKDRSPYRTLMSCPVGEAPSPYNSRFESVAWSASACHDGISWLTIGISGPDNGAVAVLKYNGIITDTIKSWRNNILRTQESECACVNGSCFTVMTDGPSNEQASYKIFKIEKGRVVKSVELNAPNYHYEECSCYPDAGEITCVCRDNWHGSNRPWVSFNQNLEYQIGYICSGVFGDSPRPNDGTGSCGPVSLNGAYGVKGFSFKYGNGVWIGRTKSTSSRSGFEMIWDPNGWTETDSSFSLKQDIIAITDWSGYSGSFIQHPELTGLNCMRPCFWVELIRGRPKEKTIWTSGSSISFCGVNSDTVGWSWPDGADLPFTIDK.

Over 1-6 (MNPNQK) the chain is Intravirion. The helical transmembrane segment at 7–27 (IITIGSICMVVGIISLMLQIG) threads the bilayer. The involved in apical transport and lipid raft association stretch occupies residues 11 to 33 (GSICMVVGIISLMLQIGNIISVW). Residues 28–450 (NIISVWVSHI…GADLPFTIDK (423 aa)) are Virion surface-facing. Positions 36–71 (HIIQTWHPNQPEPCNQSINFYTEQAAASVTLAGNSS) are hypervariable stalk region. Residues N50 and N69 are each glycosylated (N-linked (GlcNAc...) asparagine; by host). Residues 72 to 450 (LCPISGWAIY…GADLPFTIDK (379 aa)) are head of neuraminidase. 8 cysteine pairs are disulfide-bonded: C73-C398, C105-C110, C165-C212, C214-C219, C260-C273, C262-C271, C299-C316, and C402-C427. Residue R99 coordinates substrate. A glycan (N-linked (GlcNAc...) asparagine; by host) is linked at N127. D132 functions as the Proton donor/acceptor in the catalytic mechanism. Position 133 (R133) interacts with substrate. N216 carries an N-linked (GlcNAc...) asparagine; by host glycan. 258 to 259 (EE) provides a ligand contact to substrate. R274 serves as a coordination point for substrate. Residues D275, G279, and D305 each contribute to the Ca(2+) site. Position 349 (R349) interacts with substrate. Catalysis depends on Y383, which acts as the Nucleophile.

Belongs to the glycosyl hydrolase 34 family. As to quaternary structure, homotetramer. The cofactor is Ca(2+). Post-translationally, N-glycosylated.

Its subcellular location is the virion membrane. It is found in the host apical cell membrane. It carries out the reaction Hydrolysis of alpha-(2-&gt;3)-, alpha-(2-&gt;6)-, alpha-(2-&gt;8)- glycosidic linkages of terminal sialic acid residues in oligosaccharides, glycoproteins, glycolipids, colominic acid and synthetic substrates.. Its activity is regulated as follows. Inhibited by the neuraminidase inhibitors zanamivir (Relenza) and oseltamivir (Tamiflu). These drugs interfere with the release of progeny virus from infected cells and are effective against all influenza strains. Resistance to neuraminidase inhibitors is quite rare. Functionally, catalyzes the removal of terminal sialic acid residues from viral and cellular glycoconjugates. Cleaves off the terminal sialic acids on the glycosylated HA during virus budding to facilitate virus release. Additionally helps virus spread through the circulation by further removing sialic acids from the cell surface. These cleavages prevent self-aggregation and ensure the efficient spread of the progeny virus from cell to cell. Otherwise, infection would be limited to one round of replication. Described as a receptor-destroying enzyme because it cleaves a terminal sialic acid from the cellular receptors. May facilitate viral invasion of the upper airways by cleaving the sialic acid moieties on the mucin of the airway epithelial cells. Likely to plays a role in the budding process through its association with lipid rafts during intracellular transport. May additionally display a raft-association independent effect on budding. Plays a role in the determination of host range restriction on replication and virulence. Sialidase activity in late endosome/lysosome traffic seems to enhance virus replication. The polypeptide is Neuraminidase (Influenza A virus (strain A/Hong Kong/156/1997 H5N1 genotype Gs/Gd)).